Here is a 419-residue protein sequence, read N- to C-terminus: D-mannonate dehydratase (419 aa).

The substrate site is built by Asn54 and His139. Tyr176 serves as the catalytic Proton donor/acceptor. Asp227 lines the Mg(2+) pocket. Residue His229 is the Proton donor/acceptor of the active site. Mg(2+) contacts are provided by Glu253 and Glu279. Substrate contacts are provided by Glu279, Arg300, His329, Asp333, and Glu356.

It belongs to the mandelate racemase/muconate lactonizing enzyme family. GalD subfamily. Mg(2+) is required as a cofactor.

It catalyses the reaction D-mannonate = 2-dehydro-3-deoxy-D-gluconate + H2O. The protein operates within carbohydrate metabolism; pentose and glucuronate interconversion. In terms of biological role, catalyzes the dehydration of D-mannonate. Has no detectable activity with a panel of 70 other acid sugars (in vitro). This Xanthomonas oryzae pv. oryzicola (strain BLS256) protein is D-mannonate dehydratase.